We begin with the raw amino-acid sequence, 390 residues long: RNA polymerase sigma factor SigA (390 aa).

The span at 48–57 (FLEPQTDEDD) shows a compositional bias: acidic residues. A disordered region spans residues 48 to 75 (FLEPQTDEDDAKSGKAAKSRRRTQSKKK). Over residues 62–75 (KAAKSRRRTQSKKK) the composition is skewed to basic residues. The tract at residues 158-228 (MVQSNLRLVV…TRAIADQSRT (71 aa)) is sigma-70 factor domain-2. The Interaction with polymerase core subunit RpoC signature appears at 182-185 (DLIQ). Positions 237-312 (ETISRIKKTT…ESDGETPEDQ (76 aa)) are sigma-70 factor domain-3. The sigma-70 factor domain-4 stretch occupies residues 325–378 (VLDSLSPRERDVLRLRYGLDDGRMKTLEEIGQIFNVTRERIRQIEAKALRKLRH). Residues 351 to 370 (LEEIGQIFNVTRERIRQIEA) constitute a DNA-binding region (H-T-H motif).

This sequence belongs to the sigma-70 factor family. RpoD/SigA subfamily. In terms of assembly, interacts transiently with the RNA polymerase catalytic core.

The protein localises to the cytoplasm. Functionally, sigma factors are initiation factors that promote the attachment of RNA polymerase to specific initiation sites and are then released. This sigma factor is the primary sigma factor during exponential growth. This chain is RNA polymerase sigma factor SigA, found in Nostoc sp. (strain PCC 7120 / SAG 25.82 / UTEX 2576).